The sequence spans 396 residues: Elongation factor Tu (396 aa).

One can recognise a tr-type G domain in the interval 10-205 (KPHVNIGTIG…AVDESIPDPV (196 aa)). The segment at 19 to 26 (GHVDHGKT) is G1. 19 to 26 (GHVDHGKT) is a GTP binding site. Threonine 26 contributes to the Mg(2+) binding site. Residues 62–66 (GITIN) form a G2 region. The tract at residues 83 to 86 (DAPG) is G3. Residues 83–87 (DAPGH) and 138–141 (NKAD) each bind GTP. The G4 stretch occupies residues 138 to 141 (NKAD). The segment at 175–177 (SGL) is G5.

This sequence belongs to the TRAFAC class translation factor GTPase superfamily. Classic translation factor GTPase family. EF-Tu/EF-1A subfamily. Monomer.

It localises to the cytoplasm. It carries out the reaction GTP + H2O = GDP + phosphate + H(+). In terms of biological role, GTP hydrolase that promotes the GTP-dependent binding of aminoacyl-tRNA to the A-site of ribosomes during protein biosynthesis. This is Elongation factor Tu from Nocardia farcinica (strain IFM 10152).